Reading from the N-terminus, the 315-residue chain is Olfactory receptor 8J2 (315 aa).

Over 1-24 (MASGNLTWVTEFILVGVSDDPELQ) the chain is Extracellular. N-linked (GlcNAc...) asparagine glycosylation occurs at Asn5. A helical transmembrane segment spans residues 25 to 45 (IPLFLVFLVLYLLTVAGNLGI). At 46 to 57 (ITLTSVDPQLQT) the chain is on the cytoplasmic side. Residues 58–78 (PMYFFLRHLAIINLCNSTVVA) form a helical membrane-spanning segment. The Extracellular portion of the chain corresponds to 79–97 (PKMLVNFLVTKKTISYYGC). An intrachain disulfide couples Cys97 to Cys179. Residues 98–118 (AAQLGGFLVFIVAEIFTLAAM) traverse the membrane as a helical segment. The Cytoplasmic portion of the chain corresponds to 119-143 (AYDRYVAIWSPLLYAVVVSPKVCRL). Residues 144–164 (LVSLTYLQSLITALTVSSCVF) traverse the membrane as a helical segment. Over 165–205 (SVSYCSSNIINHFYCDDVPLLALSCSDTYIPETAVFIFSGT) the chain is Extracellular. Residues 206–226 (NLLFSMIVVLISYFNIVITIL) traverse the membrane as a helical segment. At 227–239 (RIRSSEGRQKAFS) the chain is on the cytoplasmic side. Residues 240-260 (TCASHMIAVVVFYGTLLFMYL) form a helical membrane-spanning segment. Topologically, residues 261–271 (QPRSNHSLDTD) are extracellular. N-linked (GlcNAc...) asparagine glycosylation is present at Asn265. A helical transmembrane segment spans residues 272-292 (KMASVFYTLVIPVLNPLIYSL). The Cytoplasmic portion of the chain corresponds to 293–315 (RNKNVKDALKRFLDNPCRSLKLM).

Belongs to the G-protein coupled receptor 1 family.

It is found in the membrane. Odorant receptor. This is Olfactory receptor 8J2 (OR8J2) from Homo sapiens (Human).